A 353-amino-acid polypeptide reads, in one-letter code: Methionine import ATP-binding protein MetN (353 aa).

The ABC transporter domain occupies leucine 6–valine 249. Residue glycine 41 to serine 48 participates in ATP binding.

Belongs to the ABC transporter superfamily. Methionine importer (TC 3.A.1.24) family. In terms of assembly, the complex is composed of two ATP-binding proteins (MetN), two transmembrane proteins (MetI) and a solute-binding protein (MetQ).

Its subcellular location is the cell membrane. It catalyses the reaction L-methionine(out) + ATP + H2O = L-methionine(in) + ADP + phosphate + H(+). The enzyme catalyses D-methionine(out) + ATP + H2O = D-methionine(in) + ADP + phosphate + H(+). In terms of biological role, part of the ABC transporter complex MetNIQ involved in methionine import. Responsible for energy coupling to the transport system. The sequence is that of Methionine import ATP-binding protein MetN from Lactobacillus acidophilus (strain ATCC 700396 / NCK56 / N2 / NCFM).